The sequence spans 325 residues: Probable arylamine N-acetyltransferase 1 (325 aa).

Cysteine 72 functions as the Acyl-thioester intermediate in the catalytic mechanism. Active-site residues include histidine 112 and aspartate 127.

Belongs to the arylamine N-acetyltransferase family.

The catalysed reaction is an arylamine + acetyl-CoA = an N-acetylarylamine + CoA. This Dictyostelium discoideum (Social amoeba) protein is Probable arylamine N-acetyltransferase 1.